A 214-amino-acid chain; its full sequence is MSQEVAAFKLVLVGDGGTGKTTFVKRHETGEFVNRYNATLGVEVHPLNFATDCGNIRFDVWDTAGQEKFGGLRDGYYINGQCGIIMFDVTSRITYKNVPNWHRDLVRVCENIPIVLCGNKVDVKERKVKAKTITFHRKKNLQYYDISAKSNYNFEKPFLWLARKLAGNPSLEFVATPALRPAETAIDPEVMQAMQKDLEEANAMPLPDEDDADF.

Residues 4-168 (EVAAFKLVLV…LWLARKLAGN (165 aa)) enclose the Small GTPase Ran-type domain. Residue 15 to 22 (DGGTGKTT) coordinates GTP. A switch-I region spans residues 34–42 (NRYNATLGV). Residues Gly-65, 119–122 (NKVD), and 147–149 (SAK) contribute to the GTP site. The switch-II stretch occupies residues 65 to 81 (GQEKFGGLRDGYYINGQ).

Belongs to the small GTPase superfamily. Ran family. As to quaternary structure, found in a nuclear export complex with RanGTP, exportin and pre-miRNA.

The protein resides in the nucleus. In terms of biological role, GTP-binding protein involved in nucleocytoplasmic transport. Required for the import of protein into the nucleus and also for RNA export. Involved in chromatin condensation and control of cell cycle. The chain is GTP-binding nuclear protein GSP1/Ran (GSP1) from Yarrowia lipolytica (strain CLIB 122 / E 150) (Yeast).